The following is a 133-amino-acid chain: ATP synthase epsilon chain (133 aa).

Belongs to the ATPase epsilon chain family. As to quaternary structure, F-type ATPases have 2 components, CF(1) - the catalytic core - and CF(0) - the membrane proton channel. CF(1) has five subunits: alpha(3), beta(3), gamma(1), delta(1), epsilon(1). CF(0) has three main subunits: a, b and c.

It localises to the cell membrane. Its function is as follows. Produces ATP from ADP in the presence of a proton gradient across the membrane. This chain is ATP synthase epsilon chain, found in Clostridium botulinum (strain ATCC 19397 / Type A).